The primary structure comprises 470 residues: Sorting nexin-17 (470 aa).

Positions 1–109 (MHFSIPETES…SFLRRAQQET (109 aa)) constitute a PX domain. Positions 36, 38, 62, and 75 each coordinate a 1,2-diacyl-sn-glycero-3-phospho-(1D-myo-inositol-3-phosphate). The 92-residue stretch at 115 to 206 (EEVSLEVLLS…YKIVLRKSYW (92 aa)) folds into the Ras-associating domain. The tract at residues 115-432 (EEVSLEVLLS…DATRESMVKL (318 aa)) is FERM-like. The tract at residues 270-432 (GYLRFDACVA…DATRESMVKL (163 aa)) is PTB-like F3 module. Phosphoserine occurs at positions 336, 407, 409, 415, 421, 437, and 440. The interval 400-425 (VGGTLRRSDSQQAVKSPPLLESPDAT) is disordered.

This sequence belongs to the sorting nexin family. As to quaternary structure, monomer. Interacts with APP (via cytoplasmic YXNPXY motif). Interacts with KIF1B. Interacts with the C-termini of P-selectin, PTC, LDLR, VLDLR, LRP1 and LRP8. Interacts with KRIT1 (via N-terminus). Interacts with HRAS. Interacts with ITGB1 and ITGB5 (via NPxY motif). Interacts with CCDC22 and CCDC93; the interaction associates SNX17 with the CCC complex. Interacts (via C-terminus) with VPS26C and VPS35L; the interactions are direct and associate SNX17 with the retriever complex.

It localises to the cytoplasm. Its subcellular location is the early endosome. The protein resides in the cytoplasmic vesicle membrane. Its function is as follows. Critical regulator of endosomal recycling of numerous surface proteins, including integrins, signaling receptor and channels. Binds to NPxY sequences in the cytoplasmic tails of target cargos. Associates with retriever and CCC complexes to prevent lysosomal degradation and promote cell surface recycling of numerous cargos such as integrins ITGB1, ITGB5 and their associated alpha subunits. Also required for maintenance of normal cell surface levels of APP and LRP1. Interacts with membranes containing phosphatidylinositol 3-phosphate (PtdIns(3P)). The protein is Sorting nexin-17 (SNX17) of Pongo abelii (Sumatran orangutan).